A 748-amino-acid polypeptide reads, in one-letter code: Junctophilin-3 (748 aa).

The Cytoplasmic portion of the chain corresponds to 1-727 (MSSGGRFNFD…LKSSTGSAPI (727 aa)). 6 MORN repeats span residues 15 to 37 (YCGG…KGQG), 39 to 60 (YTGS…SGNT), 61 to 82 (YQGT…GKWV), 83 to 105 (YKGE…GNGA), 107 to 129 (YEGT…DGGT), and 130 to 152 (YQGQ…PYGM). The interval 230-259 (SKSSLASQRSKQSSFRSEAGMSTVSSTASD) is disordered. Low complexity predominate over residues 231-244 (KSSLASQRSKQSSF). Residues 249–259 (GMSTVSSTASD) show a composition bias toward polar residues. MORN repeat units follow at residues 288–310 (YVGE…DGLK) and 311–333 (YEGE…DGTK). The segment at 416-496 (AKEFSPSFQH…TPPPAPAARN (81 aa)) is disordered. A Phosphoserine modification is found at Ser440. A compositionally biased stretch (polar residues) spans 448 to 457 (STGTPLQQES). Thr451 bears the Phosphothreonine mark. Ser457 carries the phosphoserine modification. Phosphothreonine is present on Thr471. Ser475 and Ser506 each carry phosphoserine. 2 disordered regions span residues 526–597 (CARS…SPGG) and 624–649 (HPQK…EDRG). Residues 639-649 (LGDDHRPEDRG) show a composition bias toward basic and acidic residues. A phosphoserine mark is found at Ser703 and Ser710. A helical; Anchor for type IV membrane protein membrane pass occupies residues 728–748 (LVVMVILLNIGVAILFINFFI).

It belongs to the junctophilin family. In terms of tissue distribution, specifically expressed in brain.

The protein localises to the cell membrane. It is found in the endoplasmic reticulum membrane. Junctophilins contribute to the formation of junctional membrane complexes (JMCs) which link the plasma membrane with the endoplasmic or sarcoplasmic reticulum in excitable cells. Provides a structural foundation for functional cross-talk between the cell surface and intracellular calcium release channels. JPH3 is brain-specific and appears to have an active role in certain neurons involved in motor coordination and memory. This Homo sapiens (Human) protein is Junctophilin-3 (JPH3).